The primary structure comprises 334 residues: Protein FAM50B (334 aa).

Residue alanine 2 is modified to N-acetylalanine. The disordered stretch occupies residues phenylalanine 122 to arginine 175. Basic and acidic residues-rich tracts occupy residues glutamate 132–glutamate 141 and proline 163–arginine 175.

Belongs to the FAM50 family. As to expression, widely expressed. Abundant in testis, where it is expressed in seminiferous tubules, not in the interstitium. At the cellular level, expressed in primary spermatocytes and round spermatids, but not detectable in spermatogonia, elongating spermatids, mature spermatozoa, Sertoli cells or Leydig cells.

This is Protein FAM50B (Fam50b) from Mus musculus (Mouse).